The sequence spans 797 residues: Kinesin-like protein KIF18B (797 aa).

The Kinesin motor domain occupies Thr-11–Ile-352. Gly-110–Thr-117 is a binding site for ATP. Residues Ile-367–Ile-402 adopt a coiled-coil conformation. Disordered stretches follow at residues Glu-412–Leu-476, Ala-528–Pro-564, Leu-579–Gln-640, and Lys-730–Arg-797. Polar residues predominate over residues Met-594 to Thr-608. Over residues Gly-731–Ser-744 the composition is skewed to low complexity.

The protein belongs to the TRAFAC class myosin-kinesin ATPase superfamily. Kinesin family.

Its subcellular location is the nucleus. The protein localises to the cytoplasm. The protein resides in the cytoskeleton. May play an important role in microtubule plus-end depolymerizing activity in mitotic cells. The protein is Kinesin-like protein KIF18B (KIF18B) of Gallus gallus (Chicken).